The primary structure comprises 1318 residues: 1-phosphatidylinositol 4,5-bisphosphate phosphodiesterase classes I and II (1318 aa).

The 149-residue stretch at 318–466 (DDMDQPMSHY…LRRKIIIKNK (149 aa)) folds into the PI-PLC X-box domain. Catalysis depends on residues H333 and H378. Substrate contacts are provided by K464 and K466. Residues 466 to 481 (KKKHHHHHHHHHHKKP) show a composition bias toward basic residues. Disordered stretches follow at residues 466–489 (KKKH…TPAA) and 505–594 (QQVG…KETE). Low complexity-rich tracts occupy residues 528-543 (ATGT…AGHA) and 554-563 (KDSTGSSDSD). Over residues 571-580 (LPNTTPNLPS) the composition is skewed to polar residues. Residues 585-594 (PPEKAQKETE) show a composition bias toward basic and acidic residues. One can recognise a PI-PLC Y-box domain in the interval 599–715 (ISALVNYVQP…GYLLKPEFMR (117 aa)). 2 residues coordinate substrate: S628 and R655. The region spanning 715–843 (RRSDRRLDPF…NLRSEVGQPI (129 aa)) is the C2 domain. Disordered stretches follow at residues 1080 to 1112 (LDLG…TQES) and 1296 to 1318 (GSHS…EMKT). Positions 1088–1107 (ESAAADAGEDLAGGSSSLDG) are enriched in low complexity.

Expressed in neuronal cell bodies of the optic lobe, central brain, and thoracic ganglia in adults, and the brain of larvae.

It carries out the reaction a 1,2-diacyl-sn-glycero-3-phospho-(1D-myo-inositol-4,5-bisphosphate) + H2O = 1D-myo-inositol 1,4,5-trisphosphate + a 1,2-diacyl-sn-glycerol + H(+). The production of the second messenger molecules diacylglycerol (DAG) and inositol 1,4,5-trisphosphate (IP3) is mediated by activated phosphatidylinositol-specific phospholipase C enzymes. The sequence is that of 1-phosphatidylinositol 4,5-bisphosphate phosphodiesterase classes I and II (Plc21C) from Drosophila melanogaster (Fruit fly).